We begin with the raw amino-acid sequence, 184 residues long: Large ribosomal subunit protein uL18 (184 aa).

The protein belongs to the universal ribosomal protein uL18 family. As to quaternary structure, part of the 50S ribosomal subunit. Contacts the 5S and 23S rRNAs.

In terms of biological role, this is one of the proteins that bind and probably mediate the attachment of the 5S RNA into the large ribosomal subunit, where it forms part of the central protuberance. The sequence is that of Large ribosomal subunit protein uL18 from Haloferax mediterranei (strain ATCC 33500 / DSM 1411 / JCM 8866 / NBRC 14739 / NCIMB 2177 / R-4) (Halobacterium mediterranei).